The chain runs to 187 residues: MAIIVEDGSFITSSQWENVEASPKPPPRKPKIVQPKKKPSKHLSNEDALEKYEMLFGERRKEVELDYMSHIAEEETSLSMIEYDRHFALQTDVKLSKKRKSKLVEMTPKGLKKRKRVQIQEGSVSTNTKKRMDGHVVGSSAPAINNGKGKQLLEMMGWSRGKGLGSENQGMVDPVVAVVKNNKQGLH.

2 disordered regions span residues 15-46 and 119-145; these read QWEN…LSNE and IQEG…PAIN. Residues 26 to 41 are compositionally biased toward basic residues; it reads PPRKPKIVQPKKKPSK. The 43-residue stretch at 145-187 folds into the G-patch domain; the sequence is NNGKGKQLLEMMGWSRGKGLGSENQGMVDPVVAVVKNNKQGLH.

The protein localises to the nucleus. It is found in the cytoplasm. It localises to the cytoskeleton. Its subcellular location is the microtubule organizing center. The protein resides in the spindle pole body. Functionally, has a role in meiosis and sporulation. Required for meiotic chromosome segregation. The chain is Meiotically up-regulated protein C1442.13c from Schizosaccharomyces pombe (strain 972 / ATCC 24843) (Fission yeast).